Here is a 500-residue protein sequence, read N- to C-terminus: Maturase K (500 aa).

Belongs to the intron maturase 2 family. MatK subfamily.

It is found in the plastid. Its subcellular location is the chloroplast. Functionally, usually encoded in the trnK tRNA gene intron. Probably assists in splicing its own and other chloroplast group II introns. In Prunus laurocerasus (Cherry laurel), this protein is Maturase K.